A 184-amino-acid polypeptide reads, in one-letter code: Ribosome-recycling factor (184 aa).

This sequence belongs to the RRF family.

The protein localises to the cytoplasm. Functionally, responsible for the release of ribosomes from messenger RNA at the termination of protein biosynthesis. May increase the efficiency of translation by recycling ribosomes from one round of translation to another. In Caldicellulosiruptor saccharolyticus (strain ATCC 43494 / DSM 8903 / Tp8T 6331), this protein is Ribosome-recycling factor.